A 150-amino-acid chain; its full sequence is UPF0178 protein Shew_2726 (150 aa).

Belongs to the UPF0178 family.

This chain is UPF0178 protein Shew_2726, found in Shewanella loihica (strain ATCC BAA-1088 / PV-4).